The chain runs to 357 residues: Protein RecA (357 aa).

73-80 (GPESSGKT) contacts ATP.

The protein belongs to the RecA family.

The protein resides in the cytoplasm. Can catalyze the hydrolysis of ATP in the presence of single-stranded DNA, the ATP-dependent uptake of single-stranded DNA by duplex DNA, and the ATP-dependent hybridization of homologous single-stranded DNAs. It interacts with LexA causing its activation and leading to its autocatalytic cleavage. This is Protein RecA from Nitratidesulfovibrio vulgaris (strain DSM 19637 / Miyazaki F) (Desulfovibrio vulgaris).